The sequence spans 962 residues: Voltage-gated delayed rectifier potassium channel KCNH1 (962 aa).

Topologically, residues 1 to 220 (MTMAGGRRGL…LHYCVFKTTW (220 aa)) are cytoplasmic. Residues 14–94 (QNTFLENIVR…QTFENYEMNS (81 aa)) form the PAS domain. The region spanning 93-145 (NSFEILMYKKNRTPVWFFVKIAPIRNEQDKVVLFLCTFSDITAFKQPIEDDSC) is the PAC domain. The tract at residues 151–162 (FARLTRALTSSR) is required for phosphatidylinositol bisphosphate binding. A helical membrane pass occupies residues 221–241 (DWIILILTFYTAILVPYNVSF). Residues 242-248 (KTRQNNV) are Extracellular-facing. A helical membrane pass occupies residues 249–269 (AWLVVDSIVDVIFLVDIVLNF). Residues 270–290 (HTTFVGPAGEVISDPKLIRMN) lie on the Cytoplasmic side of the membrane. A helical transmembrane segment spans residues 291–309 (YLKTWFVIDLLSCLPYDVI). The Extracellular segment spans residues 310-318 (NAFENVDEG). A helical; Voltage-sensor membrane pass occupies residues 319-341 (ISSLFSSLKVVRLLRLGRVARKL). The Cytoplasmic portion of the chain corresponds to 342-350 (DHYIEYGAA). Residues 351 to 372 (VLVLLVCVFGLAAHWMACIWYS) form a helical membrane-spanning segment. At 373–421 (IGDYEIFDEDTKTIRNNSWLYQLALDIGTPYQFNGSGSGKWEGGPSKNS) the chain is on the extracellular side. 2 N-linked (GlcNAc...) asparagine glycosylation sites follow: N388 and N406. Positions 422–443 (VYISSLYFTMTSLTSVGFGNIA) form an intramembrane region, pore-forming. The Selectivity filter motif lies at 436-441 (SVGFGN). Topologically, residues 444 to 450 (PSTDIEK) are extracellular. A helical transmembrane segment spans residues 451–471 (IFAVAIMMIGSLLYATIFGNV). Topologically, residues 472-962 (TTIFQQMYAN…ESDRDIFGAS (491 aa)) are cytoplasmic. Positions 646–743 (KRDALQKVLE…LDDLDVEKGN (98 aa)) are calmodulin-binding. The interval 672–674 (YNL) is interaction with cyclic nucleotide-binding pocket. Over residues 830–852 (ESMETLPERTKASGEATLKKTDS) the composition is skewed to basic and acidic residues. Disordered regions lie at residues 830–859 (ESME…GITK) and 933–962 (SRGS…FGAS). The interval 897 to 937 (ATVLEVKHELKEDIKALNAKMTSIEKQLSEILRILMSRGSS) is CAD (involved in subunit assembly). Over residues 934–952 (RGSSQSPQDTCEVSRPQSP) the composition is skewed to polar residues. Phosphoserine occurs at positions 947, 951, and 954. Basic and acidic residues predominate over residues 953-962 (ESDRDIFGAS).

The protein belongs to the potassium channel family. H (Eag) (TC 1.A.1.20) subfamily. Kv10.1/KCNH1 sub-subfamily. In terms of assembly, homomultimer. The potassium channel is composed of a homo- or heterotetrameric complex of pore-forming alpha subunits that can associate with modulating beta subunits. Heteromultimer with KCNH5/EAG2. Interacts with ALG10B. Interacts with RABEP1. Interacts (via C-terminus) with CTTN. Interacts (via cytoplasmic region) with Ca(2+)-bound calmodulin. In terms of processing, channel activity is regulated via tyrosine phosphorylation/dephosphorylation by SRC and PTPN6. As to expression, detected in cerebellum, at parallel fiber synapses on Purkinje cell spines. Detected in hippocampus neurons (at protein level). Detected in brain, but not in the other tissues tested; expression is highest in granular cells of the dentate gyrus, in hippocampus CA3 pyramidal cells, and in cerebellar granule cells. Detected in pituitary.

The protein localises to the cell membrane. Its subcellular location is the nucleus inner membrane. The protein resides in the cell projection. It localises to the dendrite. It is found in the axon. The protein localises to the presynaptic cell membrane. Its subcellular location is the perikaryon. The protein resides in the postsynaptic density membrane. It localises to the early endosome membrane. The enzyme catalyses K(+)(in) = K(+)(out). Its activity is regulated as follows. Channel activity is inhibited by interaction with Ca(2+)-bound calmodulin. Interaction of a single pore-forming alpha subunit with a calmodulin chain is sufficient to promote channel closure. Channel activity is not regulated by cyclic nucleotides. Channel activity is inhibited by binding intracellular phosphatidylinositol-3,5-bisphosphate and phosphatidylinositol-4,5-bisphosphate (PIP2), but is not inhibited by phosphatidylinositol 4-phosphate. Its function is as follows. Pore-forming (alpha) subunit of a voltage-gated delayed rectifier potassium channel that mediates outward-rectifying potassium currents which, on depolarization, reaches a steady-state level and do not inactivate. The activation kinetics depend on the prepulse potential and external divalent cation concentration. With negative prepulses, the current activation is delayed and slowed down several fold, whereas more positive prepulses speed up activation. The time course of activation is biphasic with a fast and a slowly activating current component. Activates at more positive membrane potentials and exhibit a steeper activation curve. Channel properties are modulated by subunit assembly. Mediates IK(NI) current in myoblasts. Involved in the regulation of cell proliferation and differentiation, in particular adipogenic and osteogenic differentiation in bone marrow-derived mesenchymal stem cells (MSCs). In Rattus norvegicus (Rat), this protein is Voltage-gated delayed rectifier potassium channel KCNH1.